We begin with the raw amino-acid sequence, 548 residues long: MLAPVSLLFCLFLQLCPSAQQYHGEKGISVPDHGFCQPISIPLCTDIAYNQTIMPNLLGHTNQEDAGLEVHQFYPLVKVQCSPELRFFLCSMYAPVCTVLEQAIPPCRSLCERARQGCEALMNKFGFQWPERLRCENFPVHGAGEICVGQNTSDNSPSGPTARPTLNLPDSITFQPHPHRDFTCPRQLKVPPYLGYRFLGEKDCGAPCEPGKANGLMYFKEEEVRFARLWVGIWAILCGISTLFTVLTYLVDMRRFSYPERPIIFLSGCYFMVAVAYTAGFLLEERAVCVERFSEDSYRTVAQGTKKEGCTILFMILYFFGMASSIWWVILALTWFLSAGMKWGHEAIEANSQYFHLAAWAVPAVKTITILAMGQVDGDVLSGVCYVGINSVDSLRGFVLAPLFVYLFLGTSFLLAGFVSLFRIRTIMKHDGTKTEKLEKLMVRIGVFSVMYTVPATIVLACYFYEQAFRDTWEKTWLVHTCKGYAVPCPNYNFAPMSPDFTVFMIKYLMTMIVGITSSFWIWSGKTLQSWRRFYHRLGNGSKGETAV.

The first 18 residues, 1-18, serve as a signal peptide directing secretion; the sequence is MLAPVSLLFCLFLQLCPS. The Extracellular segment spans residues 19-230; it reads AQQYHGEKGI…EEEVRFARLW (212 aa). The region spanning 31–150 is the FZ domain; sequence PDHGFCQPIS…HGAGEICVGQ (120 aa). 5 cysteine pairs are disulfide-bonded: cysteine 36–cysteine 97, cysteine 44–cysteine 90, cysteine 81–cysteine 118, cysteine 107–cysteine 147, and cysteine 111–cysteine 135. The N-linked (GlcNAc...) asparagine glycan is linked to asparagine 50. Asparagine 151 carries an N-linked (GlcNAc...) asparagine glycan. A helical membrane pass occupies residues 231-251; the sequence is VGIWAILCGISTLFTVLTYLV. Over 252–262 the chain is Cytoplasmic; that stretch reads DMRRFSYPERP. The chain crosses the membrane as a helical span at residues 263–283; that stretch reads IIFLSGCYFMVAVAYTAGFLL. Over 284–311 the chain is Extracellular; sequence EERAVCVERFSEDSYRTVAQGTKKEGCT. Residues 312 to 332 form a helical membrane-spanning segment; it reads ILFMILYFFGMASSIWWVILA. Over 333 to 353 the chain is Cytoplasmic; it reads LTWFLSAGMKWGHEAIEANSQ. A helical transmembrane segment spans residues 354-374; sequence YFHLAAWAVPAVKTITILAMG. Topologically, residues 375–397 are extracellular; that stretch reads QVDGDVLSGVCYVGINSVDSLRG. A helical membrane pass occupies residues 398–418; sequence FVLAPLFVYLFLGTSFLLAGF. Residues 419-444 lie on the Cytoplasmic side of the membrane; the sequence is VSLFRIRTIMKHDGTKTEKLEKLMVR. Residues 445–465 form a helical membrane-spanning segment; the sequence is IGVFSVMYTVPATIVLACYFY. At 466–502 the chain is on the extracellular side; the sequence is EQAFRDTWEKTWLVHTCKGYAVPCPNYNFAPMSPDFT. A helical membrane pass occupies residues 503–523; it reads VFMIKYLMTMIVGITSSFWIW. Residues 524-548 lie on the Cytoplasmic side of the membrane; it reads SGKTLQSWRRFYHRLGNGSKGETAV. The short motif at 526-531 is the Lys-Thr-X-X-X-Trp motif, mediates interaction with the PDZ domain of Dvl family members element; that stretch reads KTLQSW. The PDZ-binding signature appears at 546-548; the sequence is TAV.

It belongs to the G-protein coupled receptor Fz/Smo family. As to quaternary structure, interacts with wnt11 and sdc4. The extracellular domain interacts with the extracellular domain of pcdh8/papc. Interacts (via C-terminus) with dvl1 (via PDZ domain). During gastrulation, broadly expressed on the dorsal side of the embryo in deep mesodermal cells surrounding the blastopore lip and in presumptive anterior neuroectoderm. During neurulation, localized to the cranial neural crest and heart field where expression is retained at later stages in addition to new areas of expression in the neural tube, pronephros and tailbud. At tailbud stage, expressed in the pronephric duct, and broad head expression becomes more restricted to the hindbrain. In tadpoles, strongly expressed in the eye and the pericardium and myocardium of the developing heart.

It is found in the cell membrane. Its subcellular location is the endosome membrane. Its function is as follows. Receptor for Wnt proteins. Acts in both canonical and non-canonical Wnt pathways. Although different papers report differing Wnt preferences, wnt5a, wnt8b and wnt11 have been proposed as synergists. In the canonical Wnt pathway, acts via beta-catenin to promote the expression of the dorsal genes siamois, twin and nodal3 and to establish the dorsal axis of the embryo and induce dorsal mesoderm formation. In a non-canonical Wnt/planar cell polarity (PCP) pathway, acts with sdc4 and dvl2/dsh to regulate convergent extension cell movements during gastrulation. Triggers phosphorylation of dvl2/dsh and its translocation to the plasma membrane. In a third branch of Wnt signaling, acts in a non-canonical pathway via trimeric G proteins, and independently of dvl2/dsh, to recruit protein kinase C (PKC) to the membrane and thus activate PKC. PKC signaling controls cell sorting and tissue separation during gastrulation. The chain is Frizzled-7-B (fzd7-b) from Xenopus laevis (African clawed frog).